The sequence spans 423 residues: Serine hydroxymethyltransferase (423 aa).

Residues L120 and 124–126 (GHL) each bind (6S)-5,6,7,8-tetrahydrofolate. The residue at position 229 (K229) is an N6-(pyridoxal phosphate)lysine. 353-355 (SPF) contributes to the (6S)-5,6,7,8-tetrahydrofolate binding site.

The protein belongs to the SHMT family. Homodimer. Requires pyridoxal 5'-phosphate as cofactor.

Its subcellular location is the cytoplasm. It carries out the reaction (6R)-5,10-methylene-5,6,7,8-tetrahydrofolate + glycine + H2O = (6S)-5,6,7,8-tetrahydrofolate + L-serine. It participates in one-carbon metabolism; tetrahydrofolate interconversion. Its pathway is amino-acid biosynthesis; glycine biosynthesis; glycine from L-serine: step 1/1. Its function is as follows. Catalyzes the reversible interconversion of serine and glycine with tetrahydrofolate (THF) serving as the one-carbon carrier. This reaction serves as the major source of one-carbon groups required for the biosynthesis of purines, thymidylate, methionine, and other important biomolecules. Also exhibits THF-independent aldolase activity toward beta-hydroxyamino acids, producing glycine and aldehydes, via a retro-aldol mechanism. In Prochlorococcus marinus (strain MIT 9301), this protein is Serine hydroxymethyltransferase.